Consider the following 194-residue polypeptide: MADNVAGNDRLIWIDLEMTGLDTDRDSIIEIATIVTDAQLNVLAEGPELAIAHSLETLEAMDEWNRNQHRRSGLWQRVLDSQVTHAQAEAQTVAFLSEWIRAGASPMCGNSICQDRRFLHRQMSRLERYFHYRNLDVSTIKELARRWAPAVASGFAKSSAHTALSDVRDSIDELRHYRQFMGTLGGDNGGGVQN.

The Exonuclease domain occupies 11 to 174 (LIWIDLEMTG…SDVRDSIDEL (164 aa)). Tyr-132 is an active-site residue.

It belongs to the oligoribonuclease family.

Its subcellular location is the cytoplasm. Functionally, 3'-to-5' exoribonuclease specific for small oligoribonucleotides. The polypeptide is Oligoribonuclease (Xanthomonas campestris pv. campestris (strain ATCC 33913 / DSM 3586 / NCPPB 528 / LMG 568 / P 25)).